The chain runs to 302 residues: Sulfate adenylyltransferase subunit 2 (302 aa).

The segment at 279–302 is disordered; the sequence is ERQGRAIDHDQSGSMELKKRQGYF. Residues 280-302 are compositionally biased toward basic and acidic residues; sequence RQGRAIDHDQSGSMELKKRQGYF.

The protein belongs to the PAPS reductase family. CysD subfamily. Heterodimer composed of CysD, the smaller subunit, and CysN.

The catalysed reaction is sulfate + ATP + H(+) = adenosine 5'-phosphosulfate + diphosphate. Its pathway is sulfur metabolism; hydrogen sulfide biosynthesis; sulfite from sulfate: step 1/3. Functionally, with CysN forms the ATP sulfurylase (ATPS) that catalyzes the adenylation of sulfate producing adenosine 5'-phosphosulfate (APS) and diphosphate, the first enzymatic step in sulfur assimilation pathway. APS synthesis involves the formation of a high-energy phosphoric-sulfuric acid anhydride bond driven by GTP hydrolysis by CysN coupled to ATP hydrolysis by CysD. This is Sulfate adenylyltransferase subunit 2 from Photobacterium profundum (strain SS9).